Reading from the N-terminus, the 132-residue chain is Pre-histone-like nucleoprotein (132 aa).

Residues 2–23 (AILISPSNNTGWGLGTHKLFGG) constitute a propeptide that is removed on maturation. The Nuclear localization signal motif lies at 124–132 (RRKRRVRSK).

It belongs to the adenoviridae histone-like nucleoprotein family. In terms of assembly, interacts with the core-capsid bridging protein; this interaction bridges the virus core to the capsid. Interacts with host NPM1; this interaction might play a role in placing the pre-histone-like nucleoprotein on the viral DNA or regulating viral gene expression. Interacts with host HMGB1; this interaction inhibits host immune response. Cleaved near the N-terminus by the viral protease during virion maturation to form the mature protein.

Its subcellular location is the virion. It localises to the host nucleus. It is found in the host nucleolus. Its function is as follows. Plays a role in the inhibition of host immune response within the nucleus. Interacts with cellular nucleosomes and immobilizes the host immune danger signal HMGB1 on chromatin. In turn, prevents HMGB1 release out of the cell and thus decreases inflammation. Also plays a role in the wrapping and condensation of the viral DNA. May also promote viral genome import into the nucleus. The polypeptide is Pre-histone-like nucleoprotein (Canine adenovirus serotype 1 (strain CLL) (CAdV-1)).